We begin with the raw amino-acid sequence, 469 residues long: 3-isopropylmalate dehydratase large subunit (469 aa).

Residues C349, C410, and C413 each coordinate [4Fe-4S] cluster.

This sequence belongs to the aconitase/IPM isomerase family. LeuC type 1 subfamily. Heterodimer of LeuC and LeuD. The cofactor is [4Fe-4S] cluster.

It carries out the reaction (2R,3S)-3-isopropylmalate = (2S)-2-isopropylmalate. It participates in amino-acid biosynthesis; L-leucine biosynthesis; L-leucine from 3-methyl-2-oxobutanoate: step 2/4. Catalyzes the isomerization between 2-isopropylmalate and 3-isopropylmalate, via the formation of 2-isopropylmaleate. In Neisseria meningitidis serogroup B (strain ATCC BAA-335 / MC58), this protein is 3-isopropylmalate dehydratase large subunit.